The primary structure comprises 459 residues: Mitochondrial distribution and morphology protein 10 (459 aa).

This sequence belongs to the MDM10 family. In terms of assembly, component of the ER-mitochondria encounter structure (ERMES) or MDM complex, composed of MMM1, MDM10, MDM12 and MDM34. Associates with the mitochondrial outer membrane sorting assembly machinery SAM(core) complex.

It is found in the mitochondrion outer membrane. In terms of biological role, component of the ERMES/MDM complex, which serves as a molecular tether to connect the endoplasmic reticulum and mitochondria. Components of this complex are involved in the control of mitochondrial shape and protein biogenesis and may function in phospholipid exchange. MDM10 is involved in the late assembly steps of the general translocase of the mitochondrial outer membrane (TOM complex). Functions in the TOM40-specific route of the assembly of outer membrane beta-barrel proteins, including the association of TOM40 with the receptor TOM22 and small TOM proteins. Can associate with the SAM(core) complex as well as the MDM12-MMM1 complex, both involved in late steps of the major beta-barrel assembly pathway, that is responsible for biogenesis of all outer membrane beta-barrel proteins. May act as a switch that shuttles between both complexes and channels precursor proteins into the TOM40-specific pathway. Plays a role in mitochondrial morphology and in the inheritance of mitochondria. This is Mitochondrial distribution and morphology protein 10 from Clavispora lusitaniae (strain ATCC 42720) (Yeast).